A 401-amino-acid polypeptide reads, in one-letter code: S-adenosylmethionine synthase (401 aa).

His16 contributes to the ATP binding site. Asp18 contacts Mg(2+). Glu44 serves as a coordination point for K(+). L-methionine is bound by residues Glu57 and Gln100. The segment at 100–110 (QSPDIAQGVNE) is flexible loop. ATP-binding positions include 174–176 (DAK), 241–242 (RF), Asp250, 256–257 (RK), Ala273, and Lys277. Residue Asp250 coordinates L-methionine. Lys281 serves as a coordination point for L-methionine.

It belongs to the AdoMet synthase family. In terms of assembly, homotetramer; dimer of dimers. The cofactor is Mg(2+). It depends on K(+) as a cofactor.

Its subcellular location is the cytoplasm. The enzyme catalyses L-methionine + ATP + H2O = S-adenosyl-L-methionine + phosphate + diphosphate. It participates in amino-acid biosynthesis; S-adenosyl-L-methionine biosynthesis; S-adenosyl-L-methionine from L-methionine: step 1/1. In terms of biological role, catalyzes the formation of S-adenosylmethionine (AdoMet) from methionine and ATP. The overall synthetic reaction is composed of two sequential steps, AdoMet formation and the subsequent tripolyphosphate hydrolysis which occurs prior to release of AdoMet from the enzyme. This chain is S-adenosylmethionine synthase, found in Streptococcus equi subsp. zooepidemicus (strain MGCS10565).